A 192-amino-acid chain; its full sequence is A-type ATP synthase subunit E (192 aa).

This sequence belongs to the V-ATPase E subunit family. Has multiple subunits with at least A(3), B(3), C, D, E, F, H, I and proteolipid K(x).

Its subcellular location is the cell membrane. Its function is as follows. Component of the A-type ATP synthase that produces ATP from ADP in the presence of a proton gradient across the membrane. The chain is A-type ATP synthase subunit E from Halorubrum lacusprofundi (strain ATCC 49239 / DSM 5036 / JCM 8891 / ACAM 34).